Reading from the N-terminus, the 318-residue chain is MKWNKYSIQTTTDAVDMISSALNDIGIEGIEIEDNVQLTKEEAKSMFVDFIPDLPPDDGRAKVNFYIDSEEDDGSMLEKVKAELEDLRMFIDIGEGTITESETEDKDWINNWKQYWHTFTIGDLFIKPTWEPETEEMKGHAVLSIDPGTAFGTGSHETTRMVIKQLQKYVKDGDEVLDVGCGSGILSVVALKYGAKHAFGTDLDPNAIIASEENAEQNNIDKKQLEVIEGNIIDDKAVKDACGYECYDIVCANILADVLEPLSTCIHEHMKHGAYFITSGIIDTKENEVAEAFKKNPELEIVEINHDGEWVNITARRK.

Positions 159, 180, 202, and 253 each coordinate S-adenosyl-L-methionine.

The protein belongs to the methyltransferase superfamily. PrmA family.

Its subcellular location is the cytoplasm. The catalysed reaction is L-lysyl-[protein] + 3 S-adenosyl-L-methionine = N(6),N(6),N(6)-trimethyl-L-lysyl-[protein] + 3 S-adenosyl-L-homocysteine + 3 H(+). In terms of biological role, methylates ribosomal protein L11. The sequence is that of Ribosomal protein L11 methyltransferase from Lachnospira eligens (strain ATCC 27750 / DSM 3376 / VPI C15-48 / C15-B4) (Eubacterium eligens).